Here is a 470-residue protein sequence, read N- to C-terminus: ESX-4 secretion system ATPase EccB4 (470 aa).

Residues 44 to 64 traverse the membrane as a helical segment; that stretch reads LALGCVLAIVAAMGCAFVALL.

Belongs to the EccB family. As to quaternary structure, part of the ESX-4 / type VII secretion system (T7SS), which is composed of cytosolic and membrane components.

It is found in the cell membrane. In terms of biological role, an ATPase. The chain is ESX-4 secretion system ATPase EccB4 (eccB4) from Mycobacterium tuberculosis (strain CDC 1551 / Oshkosh).